Here is a 59-residue protein sequence, read N- to C-terminus: Cecropin-A2 (59 aa).

The first 23 residues, 1-23, serve as a signal peptide directing secretion; it reads MNFNKLFAIVLLAALVLLGQTEA.

Belongs to the cecropin family.

It localises to the secreted. Cecropins have lytic and antibacterial activity against several Gram-positive and Gram-negative bacteria. This chain is Cecropin-A2 (CECA2), found in Aedes albopictus (Asian tiger mosquito).